Here is a 529-residue protein sequence, read N- to C-terminus: MVNPADVPIEVSKVFDTILVLDFGSQYSHLITRRLREFNVYAEMLPCTQKISELTWKPKGIILSGGPYSVYEDGSPHVDHDIFKLNVPILGICYGMQELAWINGKGVARGDKREYGPATLNVEDSSCSLFKGVDHSQVWMSHGDKLHALPTGFKVVATSDNSPFAAISNEKENIFGIQFHPEVTHTKQGKVLLRNFAIDICQASNNWTMENFIDTEIARIQKLVGPTAEVIGAVSGGVDSTVGAKIMKEAIGDRFHAIYVDNGLMRLNETEQVYKTLTEGLGINLTVVDATDLFLGKLQGVTDPEKKRKIIGNNFIHVFEAEAAKIKPASGQEIEYLLQGTLYPDVIESISFKGPSQTIKTHHNVGGLLEDMKLKLIEPLRELFKDEVRHLGEIMGVPHDLVWRHPFPGPGLAIRVLGEVTREQLKIAREADNIFIEEIRKAGLYKDISQAFAALLPVKSVGVMGDQRTYEQVIALRAIETTDFMTADWFVFEAAFLKKTASRIVNEVDGVARVTYDITSKPPATVEWE.

A Glutamine amidotransferase type-1 domain is found at 17–206 (TILVLDFGSQ…AIDICQASNN (190 aa)). C93 acts as the Nucleophile in catalysis. Residues H180 and E182 contribute to the active site. Residues 207–404 (WTMENFIDTE…MGVPHDLVWR (198 aa)) form the GMPS ATP-PPase domain. 235 to 241 (SGGVDST) is a binding site for ATP. Positions 308, 466, 521, and 527 each coordinate XMP.

As to quaternary structure, homodimer. Mg(2+) is required as a cofactor.

The protein localises to the cytoplasm. Its subcellular location is the cytosol. It carries out the reaction XMP + L-glutamine + ATP + H2O = GMP + L-glutamate + AMP + diphosphate + 2 H(+). Its pathway is purine metabolism; GMP biosynthesis; GMP from XMP (L-Gln route): step 1/1. Its function is as follows. Catalyzes the conversion of xanthine monophosphate (XMP) to GMP in the presence of glutamine and ATP through an adenyl-XMP intermediate. The polypeptide is GMP synthase [glutamine-hydrolyzing] (GUA1) (Debaryomyces hansenii (strain ATCC 36239 / CBS 767 / BCRC 21394 / JCM 1990 / NBRC 0083 / IGC 2968) (Yeast)).